Consider the following 570-residue polypeptide: Set1/Ash2 histone methyltransferase complex subunit ash-2 (570 aa).

The PHD-type zinc-finger motif lies at 19–76 (TTVCYCDGKRELGSVEVVCSTCLKWFHGRCLKEFHELNSNGVPFMICYTFTCKQCRPT). The disordered stretch occupies residues 201-242 (NREPRHIELPPIEGPKTRGASKRRHAEAPVTGKKQKLAADYS). In terms of domain architecture, B30.2/SPRY spans 270–468 (PNVPEDPAWN…TLVEMPGSYI (199 aa)).

Component of the SET2 complex (also known as the SET1/COMPASS complex), which contains at least set-2, swd-2.1, cfp-1, rbbp-5, wdr-5.1, dpy-30 and ash-2. Within the complex, interacts with cfp-1 and wdr-5.1. As to expression, expressed in somatic and germline tissues (at protein level).

Its subcellular location is the nucleus. In terms of biological role, component of the set-2/ash-2 histone methyltransferase (HMT) complex. Required for the di- and trimethylation at 'Lys-4' of histone H3, a mark associated with epigenetic transcriptional activation. Implicated in the epigenetic inheritance of lifespan over several generations. Functions as a transcriptional regulator. Acts in the germline to limit the longevity of the soma, probably by regulating a lipid metabolism pathway that signals from the germline to the intestine, thereby preventing accumulation of mono-unsaturated fatty acids. The chain is Set1/Ash2 histone methyltransferase complex subunit ash-2 from Caenorhabditis elegans.